A 263-amino-acid chain; its full sequence is 3-methyl-2-oxobutanoate hydroxymethyltransferase (263 aa).

Mg(2+) contacts are provided by aspartate 45 and aspartate 84. 3-methyl-2-oxobutanoate contacts are provided by residues 45 to 46 (DS), aspartate 84, and lysine 112. Glutamate 114 provides a ligand contact to Mg(2+). Glutamate 180 serves as the catalytic Proton acceptor.

Belongs to the PanB family. In terms of assembly, homodecamer; pentamer of dimers. It depends on Mg(2+) as a cofactor.

The protein resides in the cytoplasm. It catalyses the reaction 3-methyl-2-oxobutanoate + (6R)-5,10-methylene-5,6,7,8-tetrahydrofolate + H2O = 2-dehydropantoate + (6S)-5,6,7,8-tetrahydrofolate. It participates in cofactor biosynthesis; (R)-pantothenate biosynthesis; (R)-pantoate from 3-methyl-2-oxobutanoate: step 1/2. Catalyzes the reversible reaction in which hydroxymethyl group from 5,10-methylenetetrahydrofolate is transferred onto alpha-ketoisovalerate to form ketopantoate. This chain is 3-methyl-2-oxobutanoate hydroxymethyltransferase, found in Klebsiella pneumoniae (strain 342).